Consider the following 513-residue polypeptide: Flavonoid 3',5'-hydroxylase (513 aa).

Residue cysteine 446 coordinates heme.

Belongs to the cytochrome P450 family. Requires heme as cofactor. Hypocotyl tissues.

The catalysed reaction is a 3',5'-unsubstituted flavanone + 2 reduced [NADPH--hemoprotein reductase] + 2 O2 = a 3',5'-dihydroxyflavanone + 2 oxidized [NADPH--hemoprotein reductase] + 2 H2O + 2 H(+). It functions in the pathway pigment biosynthesis; anthocyanin biosynthesis. In terms of biological role, catalyzes the 3'5'-hydroxylation of naringenin and eriodictyol to form 5,7,3,'4',5'-pentahydroxyflavanone and 3',5'-hydroxylation of dihydrokaempferol and dihydroquercetin to form dihydromyricetin. The protein is Flavonoid 3',5'-hydroxylase (CYP75A2) of Solanum melongena (Eggplant).